The chain runs to 65 residues: MDASRASQLINSKASYVYCKGKPVIIKSVDESSKMATVQSVDNGATMIAPLNDIRESGVINNQNS.

It belongs to the SspH family.

It localises to the spore core. The chain is Small, acid-soluble spore protein H 1 from Clostridium botulinum (strain Langeland / NCTC 10281 / Type F).